Reading from the N-terminus, the 183-residue chain is Crossover junction endodeoxyribonuclease RuvC (183 aa).

Catalysis depends on residues aspartate 16, glutamate 75, and aspartate 147. Residues aspartate 16, glutamate 75, and aspartate 147 each contribute to the Mg(2+) site.

The protein belongs to the RuvC family. In terms of assembly, homodimer which binds Holliday junction (HJ) DNA. The HJ becomes 2-fold symmetrical on binding to RuvC with unstacked arms; it has a different conformation from HJ DNA in complex with RuvA. In the full resolvosome a probable DNA-RuvA(4)-RuvB(12)-RuvC(2) complex forms which resolves the HJ. Requires Mg(2+) as cofactor.

The protein resides in the cytoplasm. The enzyme catalyses Endonucleolytic cleavage at a junction such as a reciprocal single-stranded crossover between two homologous DNA duplexes (Holliday junction).. In terms of biological role, the RuvA-RuvB-RuvC complex processes Holliday junction (HJ) DNA during genetic recombination and DNA repair. Endonuclease that resolves HJ intermediates. Cleaves cruciform DNA by making single-stranded nicks across the HJ at symmetrical positions within the homologous arms, yielding a 5'-phosphate and a 3'-hydroxyl group; requires a central core of homology in the junction. The consensus cleavage sequence is 5'-(A/T)TT(C/G)-3'. Cleavage occurs on the 3'-side of the TT dinucleotide at the point of strand exchange. HJ branch migration catalyzed by RuvA-RuvB allows RuvC to scan DNA until it finds its consensus sequence, where it cleaves and resolves the cruciform DNA. This is Crossover junction endodeoxyribonuclease RuvC from Azoarcus sp. (strain BH72).